We begin with the raw amino-acid sequence, 472 residues long: Tryptophanase (472 aa).

N6-(pyridoxal phosphate)lysine is present on Lys270.

The protein belongs to the beta-eliminating lyase family. In terms of assembly, homotetramer. Pyridoxal 5'-phosphate serves as cofactor.

It catalyses the reaction L-tryptophan + H2O = indole + pyruvate + NH4(+). It participates in amino-acid degradation; L-tryptophan degradation via pyruvate pathway; indole and pyruvate from L-tryptophan: step 1/1. This Vibrio cholerae serotype O1 (strain ATCC 39315 / El Tor Inaba N16961) protein is Tryptophanase (tnaA).